The following is a 360-amino-acid chain: 3-isopropylmalate dehydrogenase (360 aa).

Glycine 76 to glutamate 89 serves as a coordination point for NAD(+). The substrate site is built by arginine 96, arginine 106, arginine 134, and aspartate 224. 3 residues coordinate Mg(2+): aspartate 224, aspartate 248, and aspartate 252. Glycine 282 to asparagine 294 lines the NAD(+) pocket.

The protein belongs to the isocitrate and isopropylmalate dehydrogenases family. LeuB type 1 subfamily. In terms of assembly, homodimer. The cofactor is Mg(2+). Mn(2+) is required as a cofactor.

The protein resides in the cytoplasm. It catalyses the reaction (2R,3S)-3-isopropylmalate + NAD(+) = 4-methyl-2-oxopentanoate + CO2 + NADH. It functions in the pathway amino-acid biosynthesis; L-leucine biosynthesis; L-leucine from 3-methyl-2-oxobutanoate: step 3/4. In terms of biological role, catalyzes the oxidation of 3-carboxy-2-hydroxy-4-methylpentanoate (3-isopropylmalate) to 3-carboxy-4-methyl-2-oxopentanoate. The product decarboxylates to 4-methyl-2 oxopentanoate. The sequence is that of 3-isopropylmalate dehydrogenase from Pseudomonas fluorescens (strain Pf0-1).